The sequence spans 1016 residues: Calmodulin-binding transcription activator 4 (1016 aa).

The CG-1 DNA-binding region spans 38–164; that stretch reads ISTLYQEAHS…YRDVSEREEG (127 aa). Residues 324–343 are disordered; the sequence is KNGSGPSGGTGGSGDQGSES. Positions 328-338 are enriched in gly residues; sequence GPSGGTGGSGD. ANK repeat units lie at residues 647–676, 680–709, and 719–748; these read QEQG…NVDF, KGWS…SAGA, and NGKT…TNHL. A disordered region spans residues 753–786; sequence LEETENSKDTAQVQTEKTLNSISEQSPSGNEDQV. Residues 761-785 show a composition bias toward polar residues; sequence DTAQVQTEKTLNSISEQSPSGNEDQ. 3 IQ domains span residues 798 to 827, 855 to 884, and 878 to 907; these read AAQA…LVAC, YNSA…KVVK, and LRQK…AVRI. The interval 903 to 925 is calmodulin-binding; the sequence is WAVRILDKVVLRWRRKGVGLRGF. Phosphoserine occurs at positions 935 and 962.

This sequence belongs to the CAMTA family. As to expression, expressed in roots, stems, leaves, flowers and siliques.

It localises to the nucleus. In terms of biological role, transcription activator that binds to the DNA consensus sequence 5'-[ACG]CGCG[GTC]-3'. Regulates transcriptional activity in response to calcium signals. Binds calmodulin in a calcium-dependent manner. Involved together with CAMTA2 and CAMTA3 in the positive regulation of a general stress response. The sequence is that of Calmodulin-binding transcription activator 4 from Arabidopsis thaliana (Mouse-ear cress).